We begin with the raw amino-acid sequence, 471 residues long: Ribulose bisphosphate carboxylase large chain (471 aa).

Residues Asn-115 and Thr-165 each coordinate substrate. Catalysis depends on Lys-167, which acts as the Proton acceptor. Lys-169 is a binding site for substrate. Mg(2+)-binding residues include Lys-193, Asp-195, and Glu-196. An N6-carboxylysine modification is found at Lys-193. The Proton acceptor role is filled by His-286. Arg-287, His-319, and Ser-371 together coordinate substrate.

It belongs to the RuBisCO large chain family. Type I subfamily. As to quaternary structure, heterohexadecamer of 8 large chains and 8 small chains. The cofactor is Mg(2+).

It carries out the reaction 2 (2R)-3-phosphoglycerate + 2 H(+) = D-ribulose 1,5-bisphosphate + CO2 + H2O. The enzyme catalyses D-ribulose 1,5-bisphosphate + O2 = 2-phosphoglycolate + (2R)-3-phosphoglycerate + 2 H(+). In terms of biological role, ruBisCO catalyzes two reactions: the carboxylation of D-ribulose 1,5-bisphosphate, the primary event in carbon dioxide fixation, as well as the oxidative fragmentation of the pentose substrate. Both reactions occur simultaneously and in competition at the same active site. The protein is Ribulose bisphosphate carboxylase large chain of Alvinoconcha hessleri symbiotic bacterium.